Consider the following 449-residue polypeptide: SWI/SNF chromatin-remodeling accessory subunit 2 (449 aa).

Positions 1 to 11 (MHSQQRPNPQM) are enriched in polar residues. The interval 1 to 56 (MHSQQRPNPQMNRHPYGTPGSAPQMRRPGGFAGQPPQMHGPRMVAPPAAPLPKKKK) is disordered. The 78-residue stretch at 223-300 (NHPAKFKLHP…PNKLHQLLQQ (78 aa)) folds into the SWIB/MDM2 domain.

It belongs to the SMARCD family. As to quaternary structure, component of the multiprotein chromatin-remodeling complexes SWI/SNF: SWI/SNF-A (BAF), SWI/SNF-B (PBAF) and related complexes. The canonical complex contains a catalytic subunit swsn-4, core subunits swsn-1 and swsn-5, and accessory subunits swsn-3, swsn-6, phf-10, dpff-1, swsn-9 and either ham-3/swsn-2.1 or swsn-2.2.

It is found in the nucleus. It localises to the nucleoplasm. The protein resides in the chromosome. The protein localises to the nucleus envelope. Its function is as follows. Involved in transcriptional activation and repression of select genes by chromatin remodeling (alteration of DNA-nucleosome topology). Component of SWI/SNF chromatin remodeling complexes that carry out key enzymatic activities, changing chromatin structure by altering DNA-histone contacts within a nucleosome in an ATP-dependent manner. Probably regulates vulva development through the let-60/Ras pathway. Involved in nuclear reassembly after mitosis and recruitment of nuclear envelope protein, mel-28, to the nuclear periphery in the early embryo and in the adult germline. Involved in gonadogenesis. The chain is SWI/SNF chromatin-remodeling accessory subunit 2 from Caenorhabditis elegans.